The primary structure comprises 465 residues: MLIYDTKLKQKVPFEPLAPKKANIYVCGPTVYDDAHLGHARSAIAFDLLRRTLELSGYEVVLVRNFTDIDDKIINKAFKENKSIQELSSIYIESYTRDLNALNVKKPSLEPKASEYLDAMVSMIETLLEKNIAYKVSNGDIYLDTSKDKDYGSLSVHNSSIEFGRIGLVQEKRLEQDFVLWKSYKGDNDVGFDSPLGKGRPGWHIECSSMVFKTLALANTPYQIDIHAGGVDLLFPHHENEACQTRCAFGVEIAKYWMHNGFVNINNEKMSKSLGNSFFVKDALKNYDGEILRNYLLGVHYRSVLNFNEEDLLVSKKRLDKIYRLKQRVLGSLGNIDLNFKKEILECMQDDLNISKALSVLESMLSSMNEKLDQNPKNKALKGEILANLKFVEELLGIGFKNPTEYFQLGVKESEKQEIEKKIEERKRAKEQKDFIKADSIREELLNHKIALMDTPQGTTWEKLF.

Cysteine 27 is a Zn(2+) binding site. The 'HIGH' region motif lies at 29-39; sequence PTVYDDAHLGH. The Zn(2+) site is built by cysteine 207, histidine 237, and glutamate 241. Positions 269–273 match the 'KMSKS' region motif; that stretch reads KMSKS. Lysine 272 contacts ATP.

This sequence belongs to the class-I aminoacyl-tRNA synthetase family. As to quaternary structure, monomer. Requires Zn(2+) as cofactor.

Its subcellular location is the cytoplasm. The enzyme catalyses tRNA(Cys) + L-cysteine + ATP = L-cysteinyl-tRNA(Cys) + AMP + diphosphate. The protein is Cysteine--tRNA ligase of Helicobacter acinonychis (strain Sheeba).